Reading from the N-terminus, the 495-residue chain is MVTATPVKTEYEAIIGLETHCQLNTHSKIFCNCSTKFDSPPNTNVCPICLGYPGVLPVLNLEVLASAVKMGLAINGKIASYSKFDRKQYFYPDLPKNYQISQYDLPIVEQGSLEIEVVDKETKEVTRKTIGITRLHMEEDAGKLVHAGSDRLAGSTYSLVDFNRTGVPLLEIVSEPDLRSGQEAAEYAQELRRLVRYLGISDGNMQEGSLRCDVNISVRPKGQKKFGTKVEIKNMNSFSAIQKAIEYEIERQIEAIENGEPIRLETRLWEEGKQRTVTMRLKEGASDYRYFPEPDLPPIEVSQEQIETWKAQIPELPAQKRTRYETELGLSAYDARVLTDEREVAEYFETAVATGANAKLVANWVTQDIAAYLNNNKLNIGEIALKSEGLGELVNLIEEGTISGKIAKDILPELLTDGGSPKTLVEKKGLIQISDTGELEKIIDEVIASHPKELEKYRSGKKNLKGFFVGQVLKKTGGRADPKLTNQLLDKKLEA.

The protein belongs to the GatB/GatE family. GatB subfamily. In terms of assembly, heterotrimer of A, B and C subunits.

The catalysed reaction is L-glutamyl-tRNA(Gln) + L-glutamine + ATP + H2O = L-glutaminyl-tRNA(Gln) + L-glutamate + ADP + phosphate + H(+). It catalyses the reaction L-aspartyl-tRNA(Asn) + L-glutamine + ATP + H2O = L-asparaginyl-tRNA(Asn) + L-glutamate + ADP + phosphate + 2 H(+). Its function is as follows. Allows the formation of correctly charged Asn-tRNA(Asn) or Gln-tRNA(Gln) through the transamidation of misacylated Asp-tRNA(Asn) or Glu-tRNA(Gln) in organisms which lack either or both of asparaginyl-tRNA or glutaminyl-tRNA synthetases. The reaction takes place in the presence of glutamine and ATP through an activated phospho-Asp-tRNA(Asn) or phospho-Glu-tRNA(Gln). In Gloeothece citriformis (strain PCC 7424) (Cyanothece sp. (strain PCC 7424)), this protein is Aspartyl/glutamyl-tRNA(Asn/Gln) amidotransferase subunit B.